A 2371-amino-acid chain; its full sequence is Reducing polyketide synthase DEP5 (2371 aa).

Positions Leu-47–Ser-477 constitute a Ketosynthase family 3 (KS3) domain. Residues Cys-221, His-358, and His-399 each act as for beta-ketoacyl synthase activity in the active site. The segment at Val-593–Ser-905 is malonyl-CoA:ACP transacylase (MAT) domain. Catalysis depends on Ser-685, which acts as the For malonyltransferase activity. An N-terminal hotdog fold region spans residues His-982 to Lys-1120. The tract at residues His-982–Met-1158 is dehydratase (DH) domain. A PKS/mFAS DH domain is found at His-982 to Gln-1286. Catalysis depends on His-1014, which acts as the Proton acceptor; for dehydratase activity. The tract at residues Pro-1132–Gln-1286 is C-terminal hotdog fold. Residue Asp-1195 is the Proton donor; for dehydratase activity of the active site. An enoyl reductase (ER) domain region spans residues Gly-1656–Leu-1964. Residues Ala-1988–Met-2163 form a ketoreductase (KR) domain region. The Carrier domain occupies Ser-2286–Gln-2364. The residue at position 2323 (Ser-2323) is an O-(pantetheine 4'-phosphoryl)serine.

It functions in the pathway polyketide biosynthesis. Functionally, part of the gene cluster that mediates the biosynthesis of depudecin, a highly oxidized eleven-carbon linear polyketide that acts as a histone deacetylase (HDAC) inhibitor and makes a small contribution to pathogenesis. The reducing polyketide synthase DEP5 is the central enzyme in depudecin biosynthesis by yielding the backbone polyketide chain. The monooxygenases DEP2 and DEP4, as well as the uncharacterized protein DEP1, then act as tailoring enzymes to modify the intermediate polyketide chain into depudecin. The protein is Reducing polyketide synthase DEP5 of Fusarium langsethiae.